We begin with the raw amino-acid sequence, 358 residues long: 3-isopropylmalate dehydrogenase (358 aa).

79-92 (GPKWEHLPPDEQPE) provides a ligand contact to NAD(+). Substrate is bound by residues Arg-100, Arg-110, Arg-139, and Asp-227. Mg(2+)-binding residues include Asp-227, Asp-251, and Asp-255. 285 to 297 (GSAPDIAGKGVAN) serves as a coordination point for NAD(+).

This sequence belongs to the isocitrate and isopropylmalate dehydrogenases family. LeuB type 1 subfamily. As to quaternary structure, homodimer. Mg(2+) serves as cofactor. It depends on Mn(2+) as a cofactor.

The protein resides in the cytoplasm. The catalysed reaction is (2R,3S)-3-isopropylmalate + NAD(+) = 4-methyl-2-oxopentanoate + CO2 + NADH. The protein operates within amino-acid biosynthesis; L-leucine biosynthesis; L-leucine from 3-methyl-2-oxobutanoate: step 3/4. Catalyzes the oxidation of 3-carboxy-2-hydroxy-4-methylpentanoate (3-isopropylmalate) to 3-carboxy-4-methyl-2-oxopentanoate. The product decarboxylates to 4-methyl-2 oxopentanoate. This chain is 3-isopropylmalate dehydrogenase, found in Pseudoalteromonas translucida (strain TAC 125).